The sequence spans 64 residues: Putative isoleucine--tRNA ligase (64 aa).

The protein belongs to the class-I aminoacyl-tRNA synthetase family. Member of a complex that includes annexin.

It catalyses the reaction tRNA(Ile) + L-isoleucine + ATP = L-isoleucyl-tRNA(Ile) + AMP + diphosphate. The polypeptide is Putative isoleucine--tRNA ligase (Physarum polycephalum (Slime mold)).